The sequence spans 270 residues: MESGTSRTSDTGGTGRAGSTETSGSGDIARTLELLWDTGRRPSRGPKPTLTLDRVVEAAVQIADAEGLEGLSMRRVAAELGTGTMSLYRYVPGKGELLDLMLDRVQRPSENPADLGDGGWRAALEAMARETLALYRRHPWLLQVNQSRPILGPSAMDGMEKVLTLIRPMGLTDPELVSAIIMIDGYVVGAARSQLYQQEAERRTGLTDAEFWRAQVPMLEKVLASGRYPVMASLSEDTFGPDFDHFGFGLQRILDGLEVLVAQRRGESAP.

The segment covering 1-11 (MESGTSRTSDT) has biased composition (low complexity). Positions 1-28 (MESGTSRTSDTGGTGRAGSTETSGSGDI) are disordered. Residues 49-109 (TLTLDRVVEA…LMLDRVQRPS (61 aa)) form the HTH tetR-type domain. Residues 72–91 (SMRRVAAELGTGTMSLYRYV) constitute a DNA-binding region (H-T-H motif).

Its subcellular location is the cytoplasm. With respect to regulation, daunorubicin and doxorubicin can induce dissociation of DrrR1 from its DNA complex. Ampicillin cannot release DrrR1 from the DNA complex at the same concentrations. Functionally, transcriptional regulator that modulates the expression of the drrA2-drrB2 genes, which encode an ABC transporter involved in daunorubicin efflux, in response to intracellular daunorubicin/doxorubicin accumulation. In the absence of daunorubicin or doxorubicin, binds directly to the drrA2-drrB2 promoter region and negatively regulates expression of the genes. In the presence of daunorubicin or doxorubicin, DrrR1 dissociates from DNA, leading to the transcription of the genes. In Streptomyces coeruleorubidus, this protein is HTH-type transcriptional repressor DrrR1.